We begin with the raw amino-acid sequence, 162 residues long: Protein-export protein SecB (162 aa).

It belongs to the SecB family. Homotetramer, a dimer of dimers. One homotetramer interacts with 1 SecA dimer.

The protein localises to the cytoplasm. Its function is as follows. One of the proteins required for the normal export of preproteins out of the cell cytoplasm. It is a molecular chaperone that binds to a subset of precursor proteins, maintaining them in a translocation-competent state. It also specifically binds to its receptor SecA. The chain is Protein-export protein SecB from Legionella pneumophila subsp. pneumophila (strain Philadelphia 1 / ATCC 33152 / DSM 7513).